The sequence spans 349 residues: S-adenosylmethionine:tRNA ribosyltransferase-isomerase (349 aa).

It belongs to the QueA family. Monomer.

It localises to the cytoplasm. It carries out the reaction 7-aminomethyl-7-carbaguanosine(34) in tRNA + S-adenosyl-L-methionine = epoxyqueuosine(34) in tRNA + adenine + L-methionine + 2 H(+). It participates in tRNA modification; tRNA-queuosine biosynthesis. Functionally, transfers and isomerizes the ribose moiety from AdoMet to the 7-aminomethyl group of 7-deazaguanine (preQ1-tRNA) to give epoxyqueuosine (oQ-tRNA). This chain is S-adenosylmethionine:tRNA ribosyltransferase-isomerase, found in Ruegeria sp. (strain TM1040) (Silicibacter sp.).